Reading from the N-terminus, the 351-residue chain is Small ribosomal subunit biogenesis GTPase RsgA (351 aa).

Residues 1-12 show a composition bias toward basic residues; the sequence is MAKHKLSKGQQR. Residues 1–37 form a disordered region; that stretch reads MAKHKLSKGQQRRVRENHQRRLKKQDNKPEMDDNQLG. Positions 13 to 31 are enriched in basic and acidic residues; sequence RVRENHQRRLKKQDNKPEM. The CP-type G domain maps to 112–274; sequence YYDGIKPIAA…VIDSPGVREF (163 aa). GTP contacts are provided by residues 160–163 and 214–222; these read NKID and GQSGVGKSS. Residues Cys298, Cys303, His305, and Cys311 each coordinate Zn(2+).

It belongs to the TRAFAC class YlqF/YawG GTPase family. RsgA subfamily. Monomer. Associates with 30S ribosomal subunit, binds 16S rRNA. It depends on Zn(2+) as a cofactor.

The protein resides in the cytoplasm. Its function is as follows. One of several proteins that assist in the late maturation steps of the functional core of the 30S ribosomal subunit. Helps release RbfA from mature subunits. May play a role in the assembly of ribosomal proteins into the subunit. Circularly permuted GTPase that catalyzes slow GTP hydrolysis, GTPase activity is stimulated by the 30S ribosomal subunit. This chain is Small ribosomal subunit biogenesis GTPase RsgA, found in Photorhabdus laumondii subsp. laumondii (strain DSM 15139 / CIP 105565 / TT01) (Photorhabdus luminescens subsp. laumondii).